Here is a 355-residue protein sequence, read N- to C-terminus: tRNA (guanine-N(1)-)-methyltransferase (355 aa).

S-adenosyl-L-methionine contacts are provided by residues G109 and 129 to 134; that span reads IGDYVL.

This sequence belongs to the RNA methyltransferase TrmD family. As to quaternary structure, homodimer.

The protein localises to the cytoplasm. It carries out the reaction guanosine(37) in tRNA + S-adenosyl-L-methionine = N(1)-methylguanosine(37) in tRNA + S-adenosyl-L-homocysteine + H(+). In terms of biological role, specifically methylates guanosine-37 in various tRNAs. In Chlamydia abortus (strain DSM 27085 / S26/3) (Chlamydophila abortus), this protein is tRNA (guanine-N(1)-)-methyltransferase.